The primary structure comprises 404 residues: Serpin-Z2B (404 aa).

The segment at 349–373 (GTEAAAATACTMKFLCLTLTSPVDF) is RCL.

It belongs to the serpin family.

In terms of biological role, probable serine protease inhibitor. This Oryza sativa subsp. japonica (Rice) protein is Serpin-Z2B.